The sequence spans 119 residues: Holo-[acyl-carrier-protein] synthase (119 aa).

2 residues coordinate Mg(2+): aspartate 5 and glutamate 51.

The protein belongs to the P-Pant transferase superfamily. AcpS family. The cofactor is Mg(2+).

It is found in the cytoplasm. The catalysed reaction is apo-[ACP] + CoA = holo-[ACP] + adenosine 3',5'-bisphosphate + H(+). Its function is as follows. Transfers the 4'-phosphopantetheine moiety from coenzyme A to a Ser of acyl-carrier-protein. This Helicobacter pylori (strain J99 / ATCC 700824) (Campylobacter pylori J99) protein is Holo-[acyl-carrier-protein] synthase.